The primary structure comprises 823 residues: DNA mismatch repair protein MutS (823 aa).

Residue 605 to 612 (GPNMSGKS) coordinates ATP.

Belongs to the DNA mismatch repair MutS family.

In terms of biological role, this protein is involved in the repair of mismatches in DNA. It is possible that it carries out the mismatch recognition step. This protein has a weak ATPase activity. In Fervidobacterium nodosum (strain ATCC 35602 / DSM 5306 / Rt17-B1), this protein is DNA mismatch repair protein MutS.